Reading from the N-terminus, the 333-residue chain is Transaldolase NQM1 (333 aa).

Lysine 144 serves as the catalytic Schiff-base intermediate with substrate.

It belongs to the transaldolase family. Type 1 subfamily. In terms of assembly, homodimer.

It catalyses the reaction D-sedoheptulose 7-phosphate + D-glyceraldehyde 3-phosphate = D-erythrose 4-phosphate + beta-D-fructose 6-phosphate. The protein operates within carbohydrate degradation; pentose phosphate pathway; D-glyceraldehyde 3-phosphate and beta-D-fructose 6-phosphate from D-ribose 5-phosphate and D-xylulose 5-phosphate (non-oxidative stage): step 2/3. In terms of biological role, transaldolase is important for the balance of metabolites in the pentose-phosphate pathway. The protein is Transaldolase NQM1 (NQM1) of Saccharomyces cerevisiae (strain ATCC 204508 / S288c) (Baker's yeast).